The sequence spans 216 residues: Dimethylamine corrinoid protein 2 (216 aa).

Residues 1–91 (MASKEELLQE…EMPAGTETKK (91 aa)) form the B12-binding N-terminal domain. A B12-binding domain is found at 92–216 (LGVIVNGTVE…AKAKELLLGK (125 aa)). Histidine 105 contributes to the methylcob(III)alamin binding site.

This sequence belongs to the methylamine corrinoid protein family.

It functions in the pathway one-carbon metabolism; methanogenesis from dimethylamine. Acts as a methyl group carrier between MtbB and MtbA. The chain is Dimethylamine corrinoid protein 2 (mtbC2) from Methanosarcina acetivorans (strain ATCC 35395 / DSM 2834 / JCM 12185 / C2A).